We begin with the raw amino-acid sequence, 365 residues long: Deoxyribonuclease-2-alpha (365 aa).

Residues 1–19 (MATLSSLLLTALLWVPVGT) form the signal peptide. The cysteines at positions 22 and 162 are disulfide-linked. Residues asparagine 215, asparagine 269, and asparagine 293 are each glycosylated (N-linked (GlcNAc...) asparagine). 2 disulfides stabilise this stretch: cysteine 270/cysteine 348 and cysteine 311/cysteine 330. Histidine 298 is a catalytic residue.

This sequence belongs to the DNase II family.

The protein resides in the lysosome. It carries out the reaction Endonucleolytic cleavage to nucleoside 3'-phosphates and 3'-phosphooligonucleotide end-products.. In terms of biological role, hydrolyzes DNA under acidic conditions with a preference for double-stranded DNA. Plays a major role in the clearance of nucleic acids generated through apoptosis, hence preventing autoinflammation. Necessary for proper fetal development and for definitive erythropoiesis in fetal liver and bone marrow, where it degrades nuclear DNA expelled from erythroid precursor cells. This chain is Deoxyribonuclease-2-alpha (DNASE2), found in Bos taurus (Bovine).